Here is a 360-residue protein sequence, read N- to C-terminus: Protein Wnt-2 (360 aa).

An N-terminal signal peptide occupies residues 1–25 (MNAPLGGIWLWLPLLLTWLTPEVSS). Disulfide bonds link cysteine 76–cysteine 87, cysteine 127–cysteine 135, cysteine 137–cysteine 157, cysteine 206–cysteine 220, cysteine 208–cysteine 215, cysteine 278–cysteine 309, cysteine 294–cysteine 304, cysteine 308–cysteine 348, cysteine 324–cysteine 339, cysteine 326–cysteine 336, and cysteine 331–cysteine 332. Serine 212 carries O-palmitoleoyl serine; by PORCN lipidation. N-linked (GlcNAc...) asparagine glycosylation is present at asparagine 295.

Belongs to the Wnt family. Post-translationally, palmitoleoylation is required for efficient binding to frizzled receptors. Depalmitoleoylation leads to Wnt signaling pathway inhibition.

Its subcellular location is the secreted. It is found in the extracellular space. The protein localises to the extracellular matrix. Its function is as follows. Ligand for members of the frizzled family of seven transmembrane receptors. Functions in the canonical Wnt signaling pathway that results in activation of transcription factors of the TCF/LEF family. Functions as a upstream regulator of FGF10 expression. Plays an important role in embryonic lung development. May contribute to embryonic brain development by regulating the proliferation of dopaminergic precursors and neurons. The protein is Protein Wnt-2 (WNT2) of Equus caballus (Horse).